We begin with the raw amino-acid sequence, 188 residues long: MAEPTPVGREIIYCGVCTLPPEYCEYGGTTKKCQEWLEKKHPDLYARIWSPEALEAATASLSLAAQERAAKDAAKKAAKAEAAEQKHADKLAKSVVTIKRIERNKRKFVTSVTGLEAFGLELKKVAKDFGKKFATGASVTKVPSGGEEIVVQGDVSGEIEEFLLEKYKDIPEDNIELVEDKKKKASAG.

One can recognise an SUI1 domain in the interval 96-167 (VTIKRIERNK…EIEEFLLEKY (72 aa)).

This sequence belongs to the DENR family. Interacts with the 40S ribosomal subunit.

The protein localises to the cytoplasm. This is Translation machinery-associated protein 22 (TMA22) from Chaetomium globosum (strain ATCC 6205 / CBS 148.51 / DSM 1962 / NBRC 6347 / NRRL 1970) (Soil fungus).